Here is an 82-residue protein sequence, read N- to C-terminus: Host transcription reprogramming factor 10 (82 aa).

Residues 1-19 (MQIFNMVSLVALFALGATA) form the signal peptide. Residues 57 to 81 (WVCHACNKQFTTPAALQKHKDTVVH) form a C2H2-type zinc finger.

It is found in the secreted. It localises to the host nucleus. Probable secreted effector that translocates into the nuclei of host cells to reprogram the expression of targeted genes by binding on effector binding elements in rice. This chain is Host transcription reprogramming factor 10, found in Pyricularia oryzae (strain 70-15 / ATCC MYA-4617 / FGSC 8958) (Rice blast fungus).